The chain runs to 328 residues: Chlorate reductase subunit beta (328 aa).

3 consecutive 4Fe-4S ferredoxin-type domains span residues 6-35 (VAYV…RDGR), 125-156 (NHSF…KRPE), and 158-187 (GIVV…FNLQ). Cys-15, Cys-18, Cys-21, Cys-25, Cys-134, Cys-137, and Cys-142 together coordinate [4Fe-4S] cluster. The [3Fe-4S] cluster site is built by Cys-146, Cys-167, and Cys-173. [4Fe-4S] cluster is bound by residues Cys-177, Cys-194, Cys-197, Cys-209, and Cys-213.

In terms of assembly, heterotrimer of alpha, beta and gamma subunits. [3Fe-4S] cluster is required as a cofactor. The cofactor is [4Fe-4S] cluster.

The protein resides in the periplasm. Its function is as follows. Electron transfer subunit of the terminal reductase during anaerobic growth on chlorate. This Ideonella dechloratans protein is Chlorate reductase subunit beta (clrB).